The sequence spans 355 residues: Cyclin-D1-binding protein 1 (355 aa).

Position 2 is an N-acetylalanine (Ala2). 2 interaction with TCF3 regions span residues Ala2 to Val181 and Ile147 to Leu355. Positions Ala2 to Glu187 are interaction with RPLP0. Residues Ala2–Ser205 are required for interaction with CCND1. The tract at residues Asp203–Arg224 is disordered. The tract at residues Leu235–Leu355 is interaction with RPLP0.

Belongs to the CCNDBP1 family. In terms of assembly, interacts with CCND1 and GRAP2. May also interact with COPS5, RPLP0, SIRT6, SYF2 and TCF3. In terms of processing, phosphorylated.

The protein localises to the cytoplasm. Its subcellular location is the nucleus. Its function is as follows. May negatively regulate cell cycle progression. May act at least in part via inhibition of the cyclin-D1/CDK4 complex, thereby preventing phosphorylation of RB1 and blocking E2F-dependent transcription. This Rattus norvegicus (Rat) protein is Cyclin-D1-binding protein 1 (Ccndbp1).